Consider the following 246-residue polypeptide: Probable transcriptional regulatory protein CKO_01097 (246 aa).

The segment at 1-20 (MAGHSKWANTRHRKAAQDAK) is disordered.

Belongs to the TACO1 family.

It localises to the cytoplasm. This chain is Probable transcriptional regulatory protein CKO_01097, found in Citrobacter koseri (strain ATCC BAA-895 / CDC 4225-83 / SGSC4696).